We begin with the raw amino-acid sequence, 356 residues long: Phosphoserine aminotransferase (356 aa).

An L-glutamate-binding site is contributed by R41. Pyridoxal 5'-phosphate is bound by residues 75–76 (AS), W99, T147, D166, and Q189. The residue at position 190 (K190) is an N6-(pyridoxal phosphate)lysine. Position 231 to 232 (231 to 232 (NT)) interacts with pyridoxal 5'-phosphate.

This sequence belongs to the class-V pyridoxal-phosphate-dependent aminotransferase family. SerC subfamily. In terms of assembly, homodimer. It depends on pyridoxal 5'-phosphate as a cofactor.

Its subcellular location is the cytoplasm. The catalysed reaction is O-phospho-L-serine + 2-oxoglutarate = 3-phosphooxypyruvate + L-glutamate. It carries out the reaction 4-(phosphooxy)-L-threonine + 2-oxoglutarate = (R)-3-hydroxy-2-oxo-4-phosphooxybutanoate + L-glutamate. Its pathway is amino-acid biosynthesis; L-serine biosynthesis; L-serine from 3-phospho-D-glycerate: step 2/3. It participates in cofactor biosynthesis; pyridoxine 5'-phosphate biosynthesis; pyridoxine 5'-phosphate from D-erythrose 4-phosphate: step 3/5. Its function is as follows. Catalyzes the reversible conversion of 3-phosphohydroxypyruvate to phosphoserine and of 3-hydroxy-2-oxo-4-phosphonooxybutanoate to phosphohydroxythreonine. This chain is Phosphoserine aminotransferase, found in Phocaeicola vulgatus (strain ATCC 8482 / DSM 1447 / JCM 5826 / CCUG 4940 / NBRC 14291 / NCTC 11154) (Bacteroides vulgatus).